We begin with the raw amino-acid sequence, 400 residues long: 3-hydroxykynurenine transaminase (400 aa).

The tract at residues 43-44 is binds to and confers specificity for 3-hydroxykynurenine; shared with dimeric partner; that stretch reads SN. Pyridoxal 5'-phosphate-binding positions include 77–79, Ser154, and Gln204; that span reads SAH. Residue Ser154 coordinates substrate. Lys205 carries the post-translational modification N6-(pyridoxal phosphate)lysine. Residues Tyr256 and Thr259 each contribute to the pyridoxal 5'-phosphate site. Arg356 is a binding site for substrate.

The protein belongs to the class-V pyridoxal-phosphate-dependent aminotransferase family. In terms of assembly, homodimer. May form homotetramer. It depends on pyridoxal 5'-phosphate as a cofactor.

It localises to the peroxisome. It carries out the reaction glyoxylate + L-alanine = glycine + pyruvate. It catalyses the reaction L-kynurenine + glyoxylate = kynurenate + glycine + H2O. The catalysed reaction is 3-hydroxy-L-kynurenine + glyoxylate = xanthurenate + glycine + H2O. The enzyme catalyses 3-hydroxy-L-kynurenine + pyruvate = xanthurenate + L-alanine + H2O. It carries out the reaction L-kynurenine + pyruvate = kynurenate + L-alanine + H2O. It catalyses the reaction 2-oxobutanoate + L-alanine = (2S)-2-aminobutanoate + pyruvate. The catalysed reaction is L-phenylalanine + pyruvate = 3-phenylpyruvate + L-alanine. The enzyme catalyses L-serine + pyruvate = 3-hydroxypyruvate + L-alanine. It carries out the reaction L-cysteine + pyruvate = 2-oxo-3-sulfanylpropanoate + L-alanine. It catalyses the reaction 3-hydroxy-L-kynurenine + oxaloacetate = 4-(2-amino-3-hydroxyphenyl)-2,4-dioxobutanoate + L-aspartate. The catalysed reaction is 3-hydroxy-L-kynurenine + 3-phenylpyruvate = 4-(2-amino-3-hydroxyphenyl)-2,4-dioxobutanoate + L-phenylalanine. The enzyme catalyses L-kynurenine + oxaloacetate = 4-(2-aminophenyl)-2,4-dioxobutanoate + L-aspartate. It carries out the reaction 3-phenylpyruvate + L-kynurenine = 4-(2-aminophenyl)-2,4-dioxobutanoate + L-phenylalanine. It participates in amino-acid degradation; L-kynurenine degradation; kynurenate from L-kynurenine: step 1/2. In terms of biological role, catalyzes the pyridoxal 5'-phosphate-dependent transamination of both 3-hydroxykynurenine and L-kynurenine to xanthurenic acid and kynurenic acid, respectively, preferentially using the alpha-ketoacid pyruvate, glyoxylate or oxaloacetate as the amino group acceptor. The affinity and catalytic efficiency for 3-hydroxykynurenine is higher than for L-kynurenine. Involved in the detoxification of cytotoxic metabolite 3-hydroxykynurenine generated by the hydroxylation of L-kynurenine, an intermediate in the tryptophan catabolism pathway. Also catalyzes, although with a lesser efficiency, the transamination of alanine with glyoxylate as an amino group acceptor. May play a role in the detoxification of glyoxylate, a toxic plant metabolite from the diet. This chain is 3-hydroxykynurenine transaminase, found in Aedes aegypti (Yellowfever mosquito).